Here is a 61-residue protein sequence, read N- to C-terminus: Potassium channel toxin alpha-KTx 6.9 (61 aa).

Residues 1 to 23 (MNAKFILLLLVVTTTTLLPDAKG) form the signal peptide. 4 disulfides stabilise this stretch: Cys29/Cys50, Cys35/Cys55, Cys39/Cys57, and Cys45/Cys60.

The protein belongs to the short scorpion toxin superfamily. Potassium channel inhibitor family. Alpha-KTx 06 subfamily. As to expression, expressed by the venom gland.

It localises to the secreted. In terms of biological role, inhibits Kv1.2/KCNA2 and Kv1.3/KCNA3 voltage-gated potassium channels. In Opistophthalmus carinatus (African yellow leg scorpion), this protein is Potassium channel toxin alpha-KTx 6.9.